The primary structure comprises 185 residues: Ribosome-recycling factor (185 aa).

Belongs to the RRF family.

It localises to the cytoplasm. Responsible for the release of ribosomes from messenger RNA at the termination of protein biosynthesis. May increase the efficiency of translation by recycling ribosomes from one round of translation to another. The polypeptide is Ribosome-recycling factor (Aliivibrio salmonicida (strain LFI1238) (Vibrio salmonicida (strain LFI1238))).